A 294-amino-acid polypeptide reads, in one-letter code: 4-hydroxy-tetrahydrodipicolinate synthase (294 aa).

Threonine 45 provides a ligand contact to pyruvate. The active-site Proton donor/acceptor is tyrosine 133. Lysine 162 functions as the Schiff-base intermediate with substrate in the catalytic mechanism. Isoleucine 204 contributes to the pyruvate binding site.

It belongs to the DapA family. As to quaternary structure, homotetramer; dimer of dimers.

It is found in the cytoplasm. It catalyses the reaction L-aspartate 4-semialdehyde + pyruvate = (2S,4S)-4-hydroxy-2,3,4,5-tetrahydrodipicolinate + H2O + H(+). Its pathway is amino-acid biosynthesis; L-lysine biosynthesis via DAP pathway; (S)-tetrahydrodipicolinate from L-aspartate: step 3/4. Functionally, catalyzes the condensation of (S)-aspartate-beta-semialdehyde [(S)-ASA] and pyruvate to 4-hydroxy-tetrahydrodipicolinate (HTPA). The chain is 4-hydroxy-tetrahydrodipicolinate synthase from Rhizobium meliloti (strain 1021) (Ensifer meliloti).